The following is a 505-amino-acid chain: MPQALERADGSWAWVVLLATMVTQGLTLGFPTCIGIFFTELQWEFQASNSETSWFPSILTAVLHMAGPLCSILVGRFGCRVTVMLGGVLASLGMVASSFSHNLSQLYFTAGFITGLGMCFSFQSSITVLGFYFVRRRVLANALASMGVSLGITLWPLLSRYLLENLGWRGTFLVFGGIFLHCCICGAIIRPVATSVAPETKECPPPPPETPALGCLAACGRTIQRHLAFDILRHNTGYCVYILGVMWSVLGFPLPQVFLVPYAMWHSVDEQQAALLISIIGFSNIFLRPLAGLMAGRPAFASHRKYLFSLALLLNGLTNLVCAASGDFWVLVGYCLAYSVSMSGIGALIFQVLMDIVPMDQFPRALGLFTVLDGLAFLISPPLAGLLLDATNNFSYVFYMSSFFLISAALFMGGSFYALQKKEQGKQAVAADALERDLFLEAKDGPGKQRSPEIMCQSSRQPRPAGVNKHLWGCPASSRTSHEWLLWPKAVLQAKQTALGWNSPT.

Residues 1-17 (MPQALERADGSWAWVVL) lie on the Cytoplasmic side of the membrane. A helical transmembrane segment spans residues 18-38 (LATMVTQGLTLGFPTCIGIFF). At 39 to 53 (TELQWEFQASNSETS) the chain is on the extracellular side. The chain crosses the membrane as a helical span at residues 54 to 74 (WFPSILTAVLHMAGPLCSILV). Topologically, residues 75 to 80 (GRFGCR) are cytoplasmic. Residues 81–101 (VTVMLGGVLASLGMVASSFSH) form a helical membrane-spanning segment. Topologically, residues 102–110 (NLSQLYFTA) are extracellular. The helical transmembrane segment at 111–131 (GFITGLGMCFSFQSSITVLGF) threads the bilayer. The Cytoplasmic segment spans residues 132 to 137 (YFVRRR). Residues 138–158 (VLANALASMGVSLGITLWPLL) traverse the membrane as a helical segment. The Extracellular segment spans residues 159–171 (SRYLLENLGWRGT). Residues 172-192 (FLVFGGIFLHCCICGAIIRPV) form a helical membrane-spanning segment. The Cytoplasmic segment spans residues 193–239 (ATSVAPETKECPPPPPETPALGCLAACGRTIQRHLAFDILRHNTGYC). A helical membrane pass occupies residues 240-260 (VYILGVMWSVLGFPLPQVFLV). Residues 261 to 274 (PYAMWHSVDEQQAA) are Extracellular-facing. The chain crosses the membrane as a helical span at residues 275–295 (LLISIIGFSNIFLRPLAGLMA). Residues 296-305 (GRPAFASHRK) lie on the Cytoplasmic side of the membrane. Residues 306–326 (YLFSLALLLNGLTNLVCAASG) traverse the membrane as a helical segment. At 327–329 (DFW) the chain is on the extracellular side. Residues 330–350 (VLVGYCLAYSVSMSGIGALIF) form a helical membrane-spanning segment. Topologically, residues 351-367 (QVLMDIVPMDQFPRALG) are cytoplasmic. The chain crosses the membrane as a helical span at residues 368–388 (LFTVLDGLAFLISPPLAGLLL). The Extracellular portion of the chain corresponds to 389 to 396 (DATNNFSY). A helical membrane pass occupies residues 397–417 (VFYMSSFFLISAALFMGGSFY). Topologically, residues 418–505 (ALQKKEQGKQ…QTALGWNSPT (88 aa)) are cytoplasmic. Residues 443–464 (KDGPGKQRSPEIMCQSSRQPRP) are disordered.

The protein belongs to the major facilitator superfamily. Monocarboxylate porter (TC 2.A.1.13) family. As to expression, highly expressed in kidney.

It localises to the cell membrane. Proton-linked monocarboxylate transporter. Catalyzes the rapid transport across the plasma membrane of many monocarboxylates such as lactate, pyruvate, branched-chain oxo acids derived from leucine, valine and isoleucine, and the ketone bodies acetoacetate, beta-hydroxybutyrate and acetate. This chain is Monocarboxylate transporter 6 (SLC16A5), found in Homo sapiens (Human).